The following is a 360-amino-acid chain: MERVYNFSAGPSILPLPVLEKVQKELVNYNGTGMSIMEMSHRSSYFQSIIDEAGSLLRELMNIPDEYEVLFLQGGASLQFSMIPLNLMNTYKKAGYVLTGSWSKKALQEAEKVGEVQVIASSENEKFTTIPKLDGLLGNEKLDYVHITTNNTIEGTKYVDIPHVDKVPLVADMSSNILSERYDVSKFGLIYAGAQKNLGPAGLTIAIIKRDLIGGADRYCPTMLNYETYSKNNSLYNTPPSFSIYVTKIVLEWLKEQGGVSAIEEQNKMKSSLLYNFLDESKLFTSPVDPTYRSLMNIPFTTPSEELNNEFLQKAKERGLVTLKGHRSVGGMRASIYNAMPAHGVQQLVNYMKEFELENR.

Residue R42 participates in L-glutamate binding. Residues 76–77 (AS), W102, T152, D172, and Q195 contribute to the pyridoxal 5'-phosphate site. Residue K196 is modified to N6-(pyridoxal phosphate)lysine. 237–238 (NT) is a binding site for pyridoxal 5'-phosphate.

The protein belongs to the class-V pyridoxal-phosphate-dependent aminotransferase family. SerC subfamily. As to quaternary structure, homodimer. Pyridoxal 5'-phosphate serves as cofactor.

It localises to the cytoplasm. It carries out the reaction O-phospho-L-serine + 2-oxoglutarate = 3-phosphooxypyruvate + L-glutamate. The catalysed reaction is 4-(phosphooxy)-L-threonine + 2-oxoglutarate = (R)-3-hydroxy-2-oxo-4-phosphooxybutanoate + L-glutamate. Its pathway is amino-acid biosynthesis; L-serine biosynthesis; L-serine from 3-phospho-D-glycerate: step 2/3. Catalyzes the reversible conversion of 3-phosphohydroxypyruvate to phosphoserine and of 3-hydroxy-2-oxo-4-phosphonooxybutanoate to phosphohydroxythreonine. The protein is Phosphoserine aminotransferase of Bacillus thuringiensis subsp. konkukian (strain 97-27).